Reading from the N-terminus, the 171-residue chain is ATP synthase subunit b (171 aa).

The chain crosses the membrane as a helical span at residues 12-34 (FGLNLNLFETNVINLAVVIFGLY).

The protein belongs to the ATPase B chain family. As to quaternary structure, F-type ATPases have 2 components, F(1) - the catalytic core - and F(0) - the membrane proton channel. F(1) has five subunits: alpha(3), beta(3), gamma(1), delta(1), epsilon(1). F(0) has four main subunits: a(1), b(1), b'(1) and c(10-14). The alpha and beta chains form an alternating ring which encloses part of the gamma chain. F(1) is attached to F(0) by a central stalk formed by the gamma and epsilon chains, while a peripheral stalk is formed by the delta, b and b' chains.

It is found in the cellular thylakoid membrane. F(1)F(0) ATP synthase produces ATP from ADP in the presence of a proton or sodium gradient. F-type ATPases consist of two structural domains, F(1) containing the extramembraneous catalytic core and F(0) containing the membrane proton channel, linked together by a central stalk and a peripheral stalk. During catalysis, ATP synthesis in the catalytic domain of F(1) is coupled via a rotary mechanism of the central stalk subunits to proton translocation. Functionally, component of the F(0) channel, it forms part of the peripheral stalk, linking F(1) to F(0). The sequence is that of ATP synthase subunit b from Prochlorococcus marinus (strain MIT 9211).